The sequence spans 221 residues: 5'-nucleotidase (221 aa).

The Nucleophile role is filled by Asp14.

It belongs to the HAD-like hydrolase superfamily. Mn(2+) is required as a cofactor. Requires Mg(2+) as cofactor.

It catalyses the reaction a ribonucleoside 5'-phosphate + H2O = a ribonucleoside + phosphate. In terms of biological role, specifically dephosphorylates nucleoside 5'-monophosphates to nucleosides and inorganic phosphate. Displays high activity toward 5'-UMP and 5'-IMP, significant activity against 5'-XMP and 5'-TMP, and low activity against 5'-CMP. This is 5'-nucleotidase from Pseudomonas aeruginosa (strain ATCC 15692 / DSM 22644 / CIP 104116 / JCM 14847 / LMG 12228 / 1C / PRS 101 / PAO1).